Reading from the N-terminus, the 226-residue chain is Transcription factor bHLH115 (226 aa).

The bHLH domain occupies 66-117; that stretch reads TGSNSKACREKQRRDRLNDKFTELSSVLEPGRTPKTDKVAIINDAIRMVNQA.

As to quaternary structure, homodimer. Interacts with BTS and BHLH47/PYE.

The protein localises to the nucleus. This chain is Transcription factor bHLH115 (BHLH115), found in Arabidopsis thaliana (Mouse-ear cress).